The primary structure comprises 419 residues: UDP-N-acetylglucosamine 1-carboxyvinyltransferase (419 aa).

Phosphoenolpyruvate is bound at residue 22 to 23 (KN). R93 serves as a coordination point for UDP-N-acetyl-alpha-D-glucosamine. Catalysis depends on C117, which acts as the Proton donor. Residue C117 is modified to 2-(S-cysteinyl)pyruvic acid O-phosphothioketal. UDP-N-acetyl-alpha-D-glucosamine is bound by residues D307 and I329.

Belongs to the EPSP synthase family. MurA subfamily.

It localises to the cytoplasm. It catalyses the reaction phosphoenolpyruvate + UDP-N-acetyl-alpha-D-glucosamine = UDP-N-acetyl-3-O-(1-carboxyvinyl)-alpha-D-glucosamine + phosphate. It functions in the pathway cell wall biogenesis; peptidoglycan biosynthesis. Functionally, cell wall formation. Adds enolpyruvyl to UDP-N-acetylglucosamine. This chain is UDP-N-acetylglucosamine 1-carboxyvinyltransferase, found in Shewanella putrefaciens (strain CN-32 / ATCC BAA-453).